Reading from the N-terminus, the 158-residue chain is MTEAVETETVEPTTDEATAADVEPREPVYIDRPIQTVGRRKEAVVRVRLVPGTGKFNLDGRTLEAYFPNKVHQQLIKAPLVLVDRLESFDVYAHLDGGGPSGQAGALRLAIARALILVQPEDRPALKKAGFLTRDPRAIERKKYGLKKARKAPQYSKR.

A disordered region spans residues 1–20 (MTEAVETETVEPTTDEATAA). Positions 10-20 (VEPTTDEATAA) are enriched in low complexity.

Belongs to the universal ribosomal protein uS9 family.

In Mycobacterium sp. (strain JLS), this protein is Small ribosomal subunit protein uS9.